The following is a 133-amino-acid chain: Large ribosomal subunit protein bL19 (133 aa).

The protein belongs to the bacterial ribosomal protein bL19 family.

This protein is located at the 30S-50S ribosomal subunit interface and may play a role in the structure and function of the aminoacyl-tRNA binding site. The sequence is that of Large ribosomal subunit protein bL19 from Stenotrophomonas maltophilia (strain K279a).